The sequence spans 1438 residues: DNA polymerase III PolC-type (1438 aa).

The 157-residue stretch at 422–578 folds into the Exonuclease domain; that stretch reads YVVFDVETTG…YDTEATAYIF (157 aa).

Belongs to the DNA polymerase type-C family. PolC subfamily.

Its subcellular location is the cytoplasm. It carries out the reaction DNA(n) + a 2'-deoxyribonucleoside 5'-triphosphate = DNA(n+1) + diphosphate. Functionally, required for replicative DNA synthesis. This DNA polymerase also exhibits 3' to 5' exonuclease activity. In Staphylococcus aureus (strain MRSA252), this protein is DNA polymerase III PolC-type.